Here is a 467-residue protein sequence, read N- to C-terminus: Sialic acid-binding Ig-like lectin 7 (467 aa).

The first 18 residues, 1–18 (MLLLLLLPLLWGRERVEG), serve as a signal peptide directing secretion. The Extracellular portion of the chain corresponds to 19–353 (QKSNRKDYSL…KMRPVSGVLL (335 aa)). Positions 39–122 (GMCVHVRCSF…ARMSDAGRYF (84 aa)) constitute an Ig-like V-type domain. Residues Cys-46 and Cys-106 are joined by a disulfide bond. N-linked (GlcNAc...) asparagine glycosylation occurs at Asn-105. N-acetylneuraminate contacts are provided by residues Arg-124 and 131–135 (KWNYK). 2 N-linked (GlcNAc...) asparagine glycosylation sites follow: Asn-142 and Asn-165. The 84-residue stretch at 150–233 (PNILIPGTLE…AGVTTNRTIQ (84 aa)) folds into the Ig-like C2-type 1 domain. The cysteines at positions 168 and 217 are disulfide-linked. 4 N-linked (GlcNAc...) asparagine glycosylation sites follow: Asn-229, Asn-235, Asn-242, and Asn-260. Residues 240-336 (PQNLTVTVFQ…GSQHVSLNLS (97 aa)) form the Ig-like C2-type 2 domain. A disulfide bridge links Cys-276 with Cys-320. Asn-334 carries N-linked (GlcNAc...) asparagine glycosylation. Residues 354–376 (GAVGGAGATALVFLSFCVIFIVV) form a helical membrane-spanning segment. Topologically, residues 377–467 (RSCRKKSARP…NEYSEIKIPK (91 aa)) are cytoplasmic. Over residues 401-412 (IRGSASQGNLTE) the composition is skewed to polar residues. The tract at residues 401-431 (IRGSASQGNLTESWADDNPRHHGLAAHSSGE) is disordered. Ser-429 carries the post-translational modification Phosphoserine. Residues 435 to 440 (IQYAPL) carry the ITIM motif motif. Residues 443 to 467 (HKGEPQDLSGQEATNNEYSEIKIPK) are disordered. The segment covering 450–460 (LSGQEATNNEY) has biased composition (polar residues).

This sequence belongs to the immunoglobulin superfamily. SIGLEC (sialic acid binding Ig-like lectin) family. Interacts with PTPN6/SHP-1 upon phosphorylation. Post-translationally, tyrosine phosphorylated. Predominantly expressed by resting and activated natural killer cells and at lower levels by granulocytes and monocytes. High expression found in placenta, liver, lung, spleen, and peripheral blood leukocytes.

The protein localises to the membrane. Functionally, putative adhesion molecule that mediates sialic-acid dependent binding to cells. Preferentially binds to alpha-2,3- and alpha-2,6-linked sialic acid. Also binds disialogangliosides (disialogalactosyl globoside, disialyl lactotetraosylceramide and disialyl GalNAc lactotetraoslylceramide). The sialic acid recognition site may be masked by cis interactions with sialic acids on the same cell surface. In the immune response, may act as an inhibitory receptor upon ligand induced tyrosine phosphorylation by recruiting cytoplasmic phosphatase(s) via their SH2 domain(s) that block signal transduction through dephosphorylation of signaling molecules. Mediates inhibition of natural killer cells cytotoxicity. May play a role in hemopoiesis. Inhibits differentiation of CD34+ cell precursors towards myelomonocytic cell lineage and proliferation of leukemic myeloid cells (in vitro). The chain is Sialic acid-binding Ig-like lectin 7 (SIGLEC7) from Homo sapiens (Human).